The chain runs to 242 residues: ATP synthase subunit a (242 aa).

6 helical membrane-spanning segments follow: residues 29-49 (SSIYMLLASILALTYFYLAFY), 84-104 (FIPLIFSLFIFILFCNLLGMT), 114-134 (IIVTFTLAILVFLMVTIVGFV), 140-160 (FLTLFLPHGTPLWLAPLMIVI), 181-201 (MAGHVLLKVIAGFTVSLMIYL), and 203-223 (FLPIPIMVILIGFEIFVAILQ).

This sequence belongs to the ATPase A chain family. As to quaternary structure, F-type ATPases have 2 components, CF(1) - the catalytic core - and CF(0) - the membrane proton channel. CF(1) has five subunits: alpha(3), beta(3), gamma(1), delta(1), epsilon(1). CF(0) has three main subunits: a(1), b(2) and c(9-12). The alpha and beta chains form an alternating ring which encloses part of the gamma chain. CF(1) is attached to CF(0) by a central stalk formed by the gamma and epsilon chains, while a peripheral stalk is formed by the delta and b chains.

The protein localises to the cell membrane. Its function is as follows. Key component of the proton channel; it plays a direct role in the translocation of protons across the membrane. The sequence is that of ATP synthase subunit a from Rickettsia africae (strain ESF-5).